The chain runs to 264 residues: tRNA pseudouridine synthase A (264 aa).

Asp-51 serves as the catalytic Nucleophile. Tyr-109 lines the substrate pocket.

The protein belongs to the tRNA pseudouridine synthase TruA family. In terms of assembly, homodimer.

It carries out the reaction uridine(38/39/40) in tRNA = pseudouridine(38/39/40) in tRNA. In terms of biological role, formation of pseudouridine at positions 38, 39 and 40 in the anticodon stem and loop of transfer RNAs. This chain is tRNA pseudouridine synthase A, found in Polaromonas sp. (strain JS666 / ATCC BAA-500).